A 380-amino-acid polypeptide reads, in one-letter code: cAMP-dependent protein kinase type I-alpha regulatory subunit (380 aa).

Position 1 is an N-acetylmethionine (methionine 1). Alanine 2 carries the N-acetylalanine; in cAMP-dependent protein kinase type I-alpha regulatory subunit, N-terminally processed modification. Residues 2 to 135 (ASGTTASEEE…ALAKAIEKNV (134 aa)) form a dimerization and phosphorylation region. Serine 3, serine 76, and serine 82 each carry phosphoserine. Residues 64 to 96 (IQNLQKAGSRADSREDEISPPPPNPVVKGRRRR) are disordered. A Pseudophosphorylation motif motif is present at residues 95–99 (RRGAI). The residue at position 100 (serine 100) is a Phosphoserine. Residues 136–253 (LFSH…SKVS), glutamate 201, arginine 210, 254–380 (ILES…SLSV), glutamate 325, and arginine 334 contribute to the 3',5'-cyclic AMP site. Serine 257 is subject to Phosphoserine.

The protein belongs to the cAMP-dependent kinase regulatory chain family. The inactive holoenzyme is composed of two regulatory chains and two catalytic chains. Activation by cAMP releases the two active catalytic monomers and the regulatory dimer. Interacts with PRKACA and PRKACB. PRKAR1A also interacts with RFC2; the complex may be involved in cell survival. Interacts with AKAP4. Interacts with RARA; the interaction occurs in the presence of cAMP or FSH and regulates RARA transcriptional activity. Interacts with the phosphorylated form of PJA2. Interacts with CBFA2T3. Interacts with PRKX; regulates this cAMP-dependent protein kinase. Interacts with smAKAP; this interaction may target PRKAR1A to the plasma membrane. Interacts with AICDA. The pseudophosphorylation site binds to the substrate-binding region of the catalytic chain, resulting in the inhibition of its activity. The physiological significance of the in vitro phosphorylation of a proximal serine is unclear. As to expression, four types of regulatory chains are found: I-alpha, I-beta, II-alpha, and II-beta. Their expression varies among tissues and is in some cases constitutive and in others inducible.

It localises to the cell membrane. Functionally, regulatory subunit of the cAMP-dependent protein kinases involved in cAMP signaling in cells. The polypeptide is cAMP-dependent protein kinase type I-alpha regulatory subunit (PRKAR1A) (Bos taurus (Bovine)).